A 309-amino-acid polypeptide reads, in one-letter code: Oxygen-dependent coproporphyrinogen-III oxidase (309 aa).

Ser-100 contributes to the substrate binding site. Positions 104 and 114 each coordinate a divalent metal cation. His-114 serves as the catalytic Proton donor. 116–118 (NVR) is a substrate binding site. A divalent metal cation is bound by residues His-153 and His-183. An important for dimerization region spans residues 248-283 (YAEFNLVYDRGTLFGLQSGGRTESILMSLPPIVHWE). 266–268 (GGR) serves as a coordination point for substrate.

Belongs to the aerobic coproporphyrinogen-III oxidase family. In terms of assembly, homodimer. Requires a divalent metal cation as cofactor.

The protein resides in the cytoplasm. The enzyme catalyses coproporphyrinogen III + O2 + 2 H(+) = protoporphyrinogen IX + 2 CO2 + 2 H2O. It functions in the pathway porphyrin-containing compound metabolism; protoporphyrin-IX biosynthesis; protoporphyrinogen-IX from coproporphyrinogen-III (O2 route): step 1/1. Functionally, involved in the heme biosynthesis. Catalyzes the aerobic oxidative decarboxylation of propionate groups of rings A and B of coproporphyrinogen-III to yield the vinyl groups in protoporphyrinogen-IX. This Legionella pneumophila (strain Lens) protein is Oxygen-dependent coproporphyrinogen-III oxidase.